Here is a 1098-residue protein sequence, read N- to C-terminus: Tudor domain-containing protein 7 (1098 aa).

2 HTH OST-type domains span residues 3–76 (EGDL…YAMA) and 233–302 (KMDE…YPAK). S319 is modified (phosphoserine). The region spanning 337-406 (MAGDFKEKVA…PQKAILYAKL (70 aa)) is the HTH OST-type 3 domain. 2 consecutive Tudor domains span residues 513-570 (AVNV…FCSL) and 703-760 (LPFC…FLQE). Position 859 is a phosphoserine (S859). The interaction with CDK17 stretch occupies residues 861-1098 (NSKNGNMRVS…EYLIELSKVN (238 aa)). The interaction with CABLES1 stretch occupies residues 893–1098 (TSSFSTEELP…EYLIELSKVN (206 aa)).

Belongs to the TDRD7 family. As to quaternary structure, found in a mRNP complex, at least composed of TDRD1, TDRD6, TDRD7 and DDX4. Found in a complex containing CABLES1, CDK16 and CDK17. Interacts with CABLES1, CDK17 and PIWIL1.

The protein localises to the cytoplasm. In terms of biological role, component of specific cytoplasmic RNA granules involved in post-transcriptional regulation of specific genes: probably acts by binding to specific mRNAs and regulating their translation. Required for lens transparency during lens development, by regulating translation of genes such as CRYBB3 and HSPB1 in the developing lens. Also required during spermatogenesis. In Pongo abelii (Sumatran orangutan), this protein is Tudor domain-containing protein 7 (TDRD7).